A 970-amino-acid chain; its full sequence is Sodium/calcium exchanger 1 (970 aa).

An N-terminal signal peptide occupies residues 1–32; sequence MLRLSLPPNVSMGFRLVALVALLFSHVDHITA. The Extracellular portion of the chain corresponds to 33 to 71; the sequence is DTEAETGGNETTECTGSYYCKKGVILPIWEPQDPSFGDK. An N-linked (GlcNAc...) asparagine glycan is attached at Asn41. The chain crosses the membrane as a helical span at residues 72-92; it reads IARATVYFVAMVYMFLGVSII. Residues 93-133 lie on the Cytoplasmic side of the membrane; the sequence is ADRFMSSIEVITSQEKEITIKKPNGETTKTTVRIWNETVSN. The chain crosses the membrane as a helical span at residues 134-154; it reads LTLMALGSSAPEILLSVIEVC. The Alpha-1 repeat unit spans residues 138–178; sequence ALGSSAPEILLSVIEVCGHNFTAGDLGPSTIVGSAAFNMFI. Over 155–167 the chain is Extracellular; the sequence is GHNFTAGDLGPST. The N-linked (GlcNAc...) asparagine glycan is linked to Asn157. The chain crosses the membrane as a helical span at residues 168 to 188; it reads IVGSAAFNMFIIIALCVYVVP. Residues 189–201 lie on the Cytoplasmic side of the membrane; it reads DGETRKIKHLRVF. Residues 202 to 222 traverse the membrane as a helical segment; it reads FVTAAWSIFAYTWLYIILSVS. Residues 223–228 are Extracellular-facing; it reads SPGVVE. Residues 229 to 249 form a helical membrane-spanning segment; sequence VWEGLLTFFFFPICVVFAWVA. Residues 250-797 are Cytoplasmic-facing; it reads DRRLLFYKYV…FVPPTEYWNG (548 aa). Residues 251 to 270 form a putative calmodulin-binding region region; that stretch reads RRLLFYKYVYKRYRAGKQRG. Phosphoserine occurs at positions 282 and 389. Calx-beta domains are found at residues 393 to 493 and 524 to 624; these read VNME…VHLS and ATIT…IEIG. Glu417, Asp453, Asp478, Asp479, Ile481, Glu483, Glu486, Asp530, Asp531, Asp532, Glu548, Asp584, Asp610, Glu611, Glu612, and Glu715 together coordinate Ca(2+). The chain crosses the membrane as a helical span at residues 798-818; that stretch reads WACFIVSILMIGLLTAFIGDL. The Extracellular portion of the chain corresponds to 819–821; sequence ASH. A helical transmembrane segment spans residues 822–842; that stretch reads FGCTIGLKDSVTAVVFVALGT. An Alpha-2 repeat occupies 839 to 875; the sequence is ALGTSVPDTFASKVAATQDQYADASIGNVTGSNAVNV. Residues 843 to 871 lie on the Cytoplasmic side of the membrane; it reads SVPDTFASKVAATQDQYADASIGNVTGSN. Residues 872–892 form a helical membrane-spanning segment; sequence AVNVFLGIGVAWSIAAIYHAA. The Extracellular segment spans residues 893–903; sequence NGEQFKVSPGT. The helical transmembrane segment at 904-924 threads the bilayer; sequence LAFSVTLFTIFAFINVGVLLY. Topologically, residues 925–941 are cytoplasmic; it reads RRRPEIGGELGGPRTAK. The chain crosses the membrane as a helical span at residues 942–962; it reads LLTSSLFVLLWLLYIFFSSLE. Residues 963–970 are Extracellular-facing; it reads AYCHIKGF.

The protein belongs to the Ca(2+):cation antiporter (CaCA) (TC 2.A.19) family. SLC8 subfamily. Detected in heart, kidney and brain (at protein level).

Its subcellular location is the cell membrane. The catalysed reaction is Ca(2+)(in) + 3 Na(+)(out) = Ca(2+)(out) + 3 Na(+)(in). With respect to regulation, activated by micromolar levels of Ca(2+). In terms of biological role, mediates the exchange of one Ca(2+) ion against three to four Na(+) ions across the cell membrane, and thereby contributes to the regulation of cytoplasmic Ca(2+) levels and Ca(2+)-dependent cellular processes. Contributes to Ca(2+) transport during excitation-contraction coupling in muscle. In a first phase, voltage-gated channels mediate the rapid increase of cytoplasmic Ca(2+) levels due to release of Ca(2+) stores from the endoplasmic reticulum. SLC8A1 mediates the export of Ca(2+) from the cell during the next phase, so that cytoplasmic Ca(2+) levels rapidly return to baseline. Required for normal embryonic heart development and the onset of heart contractions. In Mus musculus (Mouse), this protein is Sodium/calcium exchanger 1 (Slc8a1).